Reading from the N-terminus, the 258-residue chain is UPF0246 protein ACIAD2218 (258 aa).

Belongs to the UPF0246 family.

This is UPF0246 protein ACIAD2218 from Acinetobacter baylyi (strain ATCC 33305 / BD413 / ADP1).